A 115-amino-acid polypeptide reads, in one-letter code: Large ribosomal subunit protein mL60 (115 aa).

Residues 1–23 (MLGAFNSTLARFGGLVHKVPWRL) constitute a mitochondrion transit peptide. The tract at residues 88 to 115 (AGLQGFRKGVHKSPKWTRSTNRVNPTGF) is disordered. The segment covering 103–115 (WTRSTNRVNPTGF) has biased composition (polar residues).

The protein belongs to the mitochondrion-specific ribosomal protein mL60 family. Component of the mitochondrial large ribosomal subunit (mt-LSU). Mature yeast 74S mitochondrial ribosomes consist of a small (37S) and a large (54S) subunit. The 37S small subunit contains a 15S ribosomal RNA (15S mt-rRNA) and at least 32 different proteins. The 54S large subunit contains a 21S rRNA (21S mt-rRNA) and at least 45 different proteins.

The protein resides in the mitochondrion. In terms of biological role, component of the mitochondrial ribosome (mitoribosome), a dedicated translation machinery responsible for the synthesis of mitochondrial genome-encoded proteins, including at least some of the essential transmembrane subunits of the mitochondrial respiratory chain. The mitoribosomes are attached to the mitochondrial inner membrane and translation products are cotranslationally integrated into the membrane. The sequence is that of Large ribosomal subunit protein mL60 (mrpl31) from Schizosaccharomyces pombe (strain 972 / ATCC 24843) (Fission yeast).